The primary structure comprises 429 residues: Alpha-galactosidase A (429 aa).

An N-terminal signal peptide occupies residues 1-31; that stretch reads MQLRNPELHLGCALALRFLALVSWDIPGARA. Intrachain disulfides connect Cys-52–Cys-94 and Cys-56–Cys-63. Asn-139 is a glycosylation site (N-linked (GlcNAc...) asparagine). A disulfide bridge connects residues Cys-142 and Cys-172. Catalysis depends on Asp-170, which acts as the Nucleophile. Asn-192 carries an N-linked (GlcNAc...) asparagine glycan. Cysteines 202 and 223 form a disulfide. 203–207 lines the substrate pocket; it reads EWPLY. Asn-215 carries an N-linked (GlcNAc...) asparagine glycan. Asp-231 acts as the Proton donor in catalysis. Cys-378 and Cys-382 are oxidised to a cystine.

The protein belongs to the glycosyl hydrolase 27 family. As to quaternary structure, homodimer.

It is found in the lysosome. The catalysed reaction is Hydrolysis of terminal, non-reducing alpha-D-galactose residues in alpha-D-galactosides, including galactose oligosaccharides, galactomannans and galactolipids.. The enzyme catalyses a globoside Gb3Cer (d18:1(4E)) + H2O = a beta-D-Gal-(1-&gt;4)-beta-D-Glc-(1&lt;-&gt;1)-Cer(d18:1(4E)) + D-galactose. It carries out the reaction a globoside Gb3Cer + H2O = a beta-D-galactosyl-(1-&gt;4)-beta-D-glucosyl-(1&lt;-&gt;1)-ceramide + D-galactose. Galactosylgalactosylglucosylceramidase activity is stimulated by saposin B and ammonium chloride. Functionally, catalyzes the hydrolysis of glycosphingolipids and participates in their degradation in the lysosome. The protein is Alpha-galactosidase A of Homo sapiens (Human).